We begin with the raw amino-acid sequence, 664 residues long: MSELLKITLPDGSVREVAPGSTPADIAAAIGPGLAKAALAAKVDGELVDLTRPFTADAQLALVTAKDEAEALDLARHDYAHVLAEAVQALFPGTQITFGPSTDDGFYYDFAPKDRPFTDEDLPAIEAEMRKIIAANKPLRREVWSREQLISRWKQQGESFKAEWAAELPENEELTVYWSGDDWLDMCRGPHLPSTGKLDPNAFKLTRVSGAYWRGDQKNAMLSRVYGTGWLNKKQLDAHLTRLEEAAKRDHRKLGNEMDLFHLQQEAHGSVFWHPKGYLIWRELEAYMRRAIDGAGYREVKTPQVMDARQWEQSGHWGKYRENMFVIPDEVPNVDDEGPIVSNDADWMALKPMNCPAHVLIFRQGIKSYRELPLRLYENGCCHRNEPHGALHGLMRVRQFTQDDAHIFCREDQIVSEVQAFCELADRIYKHFGFTYSIKLALRPEKRFGTEEMWDKAERELRDAVVRAGLATEEYGWEELPGEGAFYAPKLEWHLTDAIGRTWQVGTIQSDRVLPERLDASYIGEDGEKHRPVMLHRAIFGSYERFIGILIEHFAGRLPVWLAPVQAVVATIVSDADDYARDALAKLKAAGIRADTDLRNEKINYKVREHSLQKVPYLLVVGKREAEEGTVAIRILGEQHQKVMPLDEAIALLKGEATAPDLRA.

Positions 1–64 (MSELLKITLP…TADAQLALVT (64 aa)) constitute a TGS domain. Positions 250–559 (DHRKLGNEMD…LIEHFAGRLP (310 aa)) are catalytic. The Zn(2+) site is built by cysteine 355, histidine 406, and histidine 536.

Belongs to the class-II aminoacyl-tRNA synthetase family. In terms of assembly, homodimer. Zn(2+) serves as cofactor.

The protein localises to the cytoplasm. The enzyme catalyses tRNA(Thr) + L-threonine + ATP = L-threonyl-tRNA(Thr) + AMP + diphosphate + H(+). In terms of biological role, catalyzes the attachment of threonine to tRNA(Thr) in a two-step reaction: L-threonine is first activated by ATP to form Thr-AMP and then transferred to the acceptor end of tRNA(Thr). Also edits incorrectly charged L-seryl-tRNA(Thr). The polypeptide is Threonine--tRNA ligase (Novosphingobium aromaticivorans (strain ATCC 700278 / DSM 12444 / CCUG 56034 / CIP 105152 / NBRC 16084 / F199)).